Reading from the N-terminus, the 903-residue chain is Protein translocase subunit SecA (903 aa).

ATP contacts are provided by residues Gln-87, 105–109 (GEGKT), and Asp-513. Positions 840 to 853 (MEAQRRAQAEEAAR) are enriched in basic and acidic residues. The segment at 840–903 (MEAQRRAQAE…KYKQCHGQIN (64 aa)) is disordered. Positions 887, 889, 898, and 899 each coordinate Zn(2+).

This sequence belongs to the SecA family. As to quaternary structure, monomer and homodimer. Part of the essential Sec protein translocation apparatus which comprises SecA, SecYEG and auxiliary proteins SecDF-YajC and YidC. The cofactor is Zn(2+).

It localises to the cell inner membrane. It is found in the cytoplasm. The catalysed reaction is ATP + H2O + cellular proteinSide 1 = ADP + phosphate + cellular proteinSide 2.. Part of the Sec protein translocase complex. Interacts with the SecYEG preprotein conducting channel. Has a central role in coupling the hydrolysis of ATP to the transfer of proteins into and across the cell membrane, serving both as a receptor for the preprotein-SecB complex and as an ATP-driven molecular motor driving the stepwise translocation of polypeptide chains across the membrane. The polypeptide is Protein translocase subunit SecA (Vibrio cholerae serotype O1 (strain M66-2)).